An 82-amino-acid chain; its full sequence is Small ribosomal subunit protein uS17 (82 aa).

Belongs to the universal ribosomal protein uS17 family. In terms of assembly, part of the 30S ribosomal subunit.

In terms of biological role, one of the primary rRNA binding proteins, it binds specifically to the 5'-end of 16S ribosomal RNA. This is Small ribosomal subunit protein uS17 from Shewanella halifaxensis (strain HAW-EB4).